The chain runs to 337 residues: D-alanine--D-alanine ligase (337 aa).

The 201-residue stretch at 126-326 folds into the ATP-grasp domain; it reads KQIWISNGLS…YADLVLWLLS (201 aa). Position 152–207 (152–207) interacts with ATP; that stretch reads VKHLGLPLIVKPAHEGSSLGLTKVKSVEELPAAYQLAAGLDKKVIAETCIVGDELT. The Mg(2+) site is built by aspartate 279, glutamate 293, and asparagine 295.

The protein belongs to the D-alanine--D-alanine ligase family. Mg(2+) serves as cofactor. It depends on Mn(2+) as a cofactor.

Its subcellular location is the cytoplasm. It carries out the reaction 2 D-alanine + ATP = D-alanyl-D-alanine + ADP + phosphate + H(+). It participates in cell wall biogenesis; peptidoglycan biosynthesis. In terms of biological role, cell wall formation. The sequence is that of D-alanine--D-alanine ligase from Polynucleobacter asymbioticus (strain DSM 18221 / CIP 109841 / QLW-P1DMWA-1) (Polynucleobacter necessarius subsp. asymbioticus).